Reading from the N-terminus, the 155-residue chain is Endoribonuclease YbeY (155 aa).

3 residues coordinate Zn(2+): histidine 118, histidine 122, and histidine 128.

The protein belongs to the endoribonuclease YbeY family. The cofactor is Zn(2+).

The protein resides in the cytoplasm. In terms of biological role, single strand-specific metallo-endoribonuclease involved in late-stage 70S ribosome quality control and in maturation of the 3' terminus of the 16S rRNA. This is Endoribonuclease YbeY from Bordetella petrii (strain ATCC BAA-461 / DSM 12804 / CCUG 43448).